A 151-amino-acid polypeptide reads, in one-letter code: Ocs element-binding factor 1 (151 aa).

A compositionally biased stretch (polar residues) spans 1-17; it reads MSSSSLSPTAGRTSGSD. Positions 1–47 are disordered; the sequence is MSSSSLSPTAGRTSGSDGDSAADTHRREKRRLSNRESARRSRLRKQQ. The span at 22–39 shows a compositional bias: basic and acidic residues; the sequence is ADTHRREKRRLSNRESAR. Positions 24–87 constitute a bZIP domain; the sequence is THRREKRRLS…TRVEQENTVL (64 aa). The segment at 26–45 is basic motif; it reads RREKRRLSNRESARRSRLRK. The leucine-zipper stretch occupies residues 52 to 59; that stretch reads LVQEVARL.

Belongs to the bZIP family. In terms of tissue distribution, roots and shoots of young plants, and basal portion of leaves.

It localises to the nucleus. May contribute to developmentally specific patterns of gene expression. Binds specifically to ocs elements which are transcriptional enhancer found in the promoters of several plant genes. OCSBF-1 is able to bind to a site within each half of the ocs element as well as to animal AP-1 and CREB sites. The protein is Ocs element-binding factor 1 (OBF1) of Zea mays (Maize).